Here is a 243-residue protein sequence, read N- to C-terminus: Lectin-4 (243 aa).

Gln-1 is modified (pyrrolidone carboxylic acid). Asn-5 is a glycosylation site (N-linked (GlcNAc...) asparagine; in alpha chain). N-linked (GlcNAc...) asparagine glycosylation is present at Asn-18. Mn(2+)-binding residues include Glu-129 and Asp-131. Positions 131, 133, 135, and 140 each coordinate Ca(2+). The Mn(2+) site is built by Asp-140 and His-145.

The protein belongs to the leguminous lectin family. As to quaternary structure, homodimer of Alpha and Beta forms. In terms of processing, N-glycosylation of Asn-5 converts form Beta to form Alpha.

Functionally, lectin which has a strong affinity for both the Lewis b and y human blood-group determinants. This is Lectin-4 from Griffonia simplicifolia (Bandeiraea simplicifolia).